Reading from the N-terminus, the 412-residue chain is Cellobiose 2-epimerase (412 aa).

This sequence belongs to the cellobiose 2-epimerase family.

It carries out the reaction D-cellobiose = beta-D-glucosyl-(1-&gt;4)-D-mannopyranose. Catalyzes the reversible epimerization of cellobiose to 4-O-beta-D-glucopyranosyl-D-mannose (Glc-Man). Can also use lactose, epilactose, mannobiose and cellotriose. Highly specific for oligosaccharides linked by the beta-1,4-glycosidic linkage. Shows preference for lactose. The protein is Cellobiose 2-epimerase (ce) of Rhodothermus marinus (Rhodothermus obamensis).